Consider the following 503-residue polypeptide: Probable cytosol aminopeptidase (503 aa).

2 residues coordinate Mn(2+): Lys-270 and Asp-275. Residue Lys-282 is part of the active site. Mn(2+) is bound by residues Asp-293, Asp-352, and Glu-354. The active site involves Arg-356.

This sequence belongs to the peptidase M17 family. Mn(2+) is required as a cofactor.

It localises to the cytoplasm. The enzyme catalyses Release of an N-terminal amino acid, Xaa-|-Yaa-, in which Xaa is preferably Leu, but may be other amino acids including Pro although not Arg or Lys, and Yaa may be Pro. Amino acid amides and methyl esters are also readily hydrolyzed, but rates on arylamides are exceedingly low.. It carries out the reaction Release of an N-terminal amino acid, preferentially leucine, but not glutamic or aspartic acids.. In terms of biological role, presumably involved in the processing and regular turnover of intracellular proteins. Catalyzes the removal of unsubstituted N-terminal amino acids from various peptides. In Yersinia pseudotuberculosis serotype O:1b (strain IP 31758), this protein is Probable cytosol aminopeptidase.